The following is a 271-amino-acid chain: MVSLEMLKEHETVRTAPVSEAEALVDVRGLSLWYGKKQALYDISVRFPRNQVTAIIGPSGCGKSTLLRSLNRMNDLVPGVRVEGEVLYEGVNIYDPRVDPVAVRRHIGMVFQKPNPFPKTIFENVAFGLRLMGVKGSELEDRVVEALKRAALWEEVKDRFKKESGLRLSGGQQQRLCIARAIAVEPPLLLMDEPTSALDPIATQAIEDLILELKERYTVVIVTHNMQQAARVSDRTLFMHLGVLVEEGPTEVIFTKPKHPYTEAYITGRFG.

In terms of domain architecture, ABC transporter spans 13–266 (VRTAPVSEAE…PKHPYTEAYI (254 aa)). 57-64 (GPSGCGKS) provides a ligand contact to ATP.

This sequence belongs to the ABC transporter superfamily. Phosphate importer (TC 3.A.1.7) family. As to quaternary structure, the complex is composed of two ATP-binding proteins (PstB), two transmembrane proteins (PstC and PstA) and a solute-binding protein (PstS).

The protein resides in the cell inner membrane. It carries out the reaction phosphate(out) + ATP + H2O = ADP + 2 phosphate(in) + H(+). Its function is as follows. Part of the ABC transporter complex PstSACB involved in phosphate import. Responsible for energy coupling to the transport system. In Thermus thermophilus (strain ATCC 27634 / DSM 579 / HB8), this protein is Phosphate import ATP-binding protein PstB.